We begin with the raw amino-acid sequence, 378 residues long: Squalene methyltransferase 2 (378 aa).

A helical membrane pass occupies residues 17-37 (LLTVKGATGLIAALILGYIII).

This sequence belongs to the class I-like SAM-binding methyltransferase superfamily. Erg6/SMT family.

The protein resides in the microsome membrane. It carries out the reaction squalene + 2 S-adenosyl-L-methionine = 3,22-dimethyl-1,2,23,24-tetradehydro-2,3,22,23-tetrahydrosqualene + 2 S-adenosyl-L-homocysteine + 2 H(+). Converts squalene to mono- and dimethyl derivatives, but not to tri- and tetramethylated products. Unable to methylate cycloartenol, zymosterol or lanosterol. Methylates both C-3 and C22 positions, but only C-3 position in monomethylated products. Produces mainly monomethylated squalene and only 20% of dimethylated squalene. The sequence is that of Squalene methyltransferase 2 (TMT-2) from Botryococcus braunii (Green alga).